Reading from the N-terminus, the 371-residue chain is Glutamate 5-kinase (371 aa).

Residue lysine 11 coordinates ATP. The substrate site is built by serine 52, aspartate 139, and asparagine 151. Residues threonine 171–aspartate 172 and threonine 213–lysine 219 contribute to the ATP site. The PUA domain occupies glutamate 278 to glutamate 356.

Belongs to the glutamate 5-kinase family.

The protein localises to the cytoplasm. It catalyses the reaction L-glutamate + ATP = L-glutamyl 5-phosphate + ADP. The protein operates within amino-acid biosynthesis; L-proline biosynthesis; L-glutamate 5-semialdehyde from L-glutamate: step 1/2. Catalyzes the transfer of a phosphate group to glutamate to form L-glutamate 5-phosphate. The sequence is that of Glutamate 5-kinase from Synechococcus sp. (strain JA-2-3B'a(2-13)) (Cyanobacteria bacterium Yellowstone B-Prime).